The sequence spans 84 residues: MNSLLMITACLILIGTVWAEDGYLFDKRKRCTLACIDKTGDKNCDRNCKKEGGSFGHCSYSACWCKGLPGSTPISRTPGKTCKK.

Residues 1-19 form the signal peptide; sequence MNSLLMITACLILIGTVWA. The 64-residue stretch at 20–83 folds into the LCN-type CS-alpha/beta domain; that stretch reads EDGYLFDKRK…ISRTPGKTCK (64 aa). Intrachain disulfides connect Cys31/Cys82, Cys35/Cys58, Cys44/Cys63, and Cys48/Cys65.

In terms of tissue distribution, expressed by the venom gland.

The protein resides in the secreted. In terms of biological role, beta toxins bind voltage-independently at site-4 of sodium channels (Nav) and shift the voltage of activation toward more negative potentials thereby affecting sodium channel activation and promoting spontaneous and repetitive firing. Has some action on peripheral ganglia, but not on other sodium channels such as those from cerebellum granular cells in culture. Induces sleep, suggesting a strong antiepileptic action. The protein is Toxin Cll9 of Centruroides limpidus (Mexican scorpion).